A 114-amino-acid polypeptide reads, in one-letter code: Small ribosomal subunit protein bS6 (114 aa).

The protein belongs to the bacterial ribosomal protein bS6 family.

Binds together with bS18 to 16S ribosomal RNA. In Bacteroides fragilis (strain YCH46), this protein is Small ribosomal subunit protein bS6.